The following is a 157-amino-acid chain: 6,7-dimethyl-8-ribityllumazine synthase (157 aa).

5-amino-6-(D-ribitylamino)uracil-binding positions include W27, 59 to 61 (AIE), and 81 to 83 (VVI). (2S)-2-hydroxy-3-oxobutyl phosphate is bound at residue 86 to 87 (ET). Catalysis depends on H89, which acts as the Proton donor. N114 serves as a coordination point for 5-amino-6-(D-ribitylamino)uracil. Residue R128 participates in (2S)-2-hydroxy-3-oxobutyl phosphate binding.

This sequence belongs to the DMRL synthase family. As to quaternary structure, homopentamer.

It catalyses the reaction (2S)-2-hydroxy-3-oxobutyl phosphate + 5-amino-6-(D-ribitylamino)uracil = 6,7-dimethyl-8-(1-D-ribityl)lumazine + phosphate + 2 H2O + H(+). Its pathway is cofactor biosynthesis; riboflavin biosynthesis; riboflavin from 2-hydroxy-3-oxobutyl phosphate and 5-amino-6-(D-ribitylamino)uracil: step 1/2. Catalyzes the formation of 6,7-dimethyl-8-ribityllumazine by condensation of 5-amino-6-(D-ribitylamino)uracil with 3,4-dihydroxy-2-butanone 4-phosphate. This is the penultimate step in the biosynthesis of riboflavin. The chain is 6,7-dimethyl-8-ribityllumazine synthase from Mycolicibacterium vanbaalenii (strain DSM 7251 / JCM 13017 / BCRC 16820 / KCTC 9966 / NRRL B-24157 / PYR-1) (Mycobacterium vanbaalenii).